We begin with the raw amino-acid sequence, 150 residues long: MVADAVAKVCGSEAIKANLRRSWGVLSADIEATGLMLMSNLFTLRPDTKTYFTRLGDVQKGKANSKLRGHAITLTYALNNFVDSLDDPSRLKCVVEKFAVNHINRKISGDAFGAIVEPMKETLKARMGNYYSDDVAGAWAALVGVVQAAL.

A Blocked amino end (Val) modification is found at Val2. Residues 10–150 (CGSEAIKANL…ALVGVVQAAL (141 aa)) enclose the Globin domain. Residue His102 coordinates heme b.

This sequence belongs to the globin family. As to quaternary structure, heterotetramer of two alpha chains and two beta chains.

The sequence is that of Globin-2 A chain from Anadara inaequivalvis (Inequivalve ark).